The following is a 60-amino-acid chain: Large ribosomal subunit protein uL30 (60 aa).

The protein belongs to the universal ribosomal protein uL30 family. Part of the 50S ribosomal subunit.

This chain is Large ribosomal subunit protein uL30, found in Streptococcus pyogenes serotype M1.